A 480-amino-acid polypeptide reads, in one-letter code: ATP synthase subunit beta (480 aa).

Residue 166 to 173 coordinates ATP; that stretch reads GGAGVGKT.

This sequence belongs to the ATPase alpha/beta chains family. As to quaternary structure, F-type ATPases have 2 components, CF(1) - the catalytic core - and CF(0) - the membrane proton channel. CF(1) has five subunits: alpha(3), beta(3), gamma(1), delta(1), epsilon(1). CF(0) has three main subunits: a(1), b(2) and c(9-12). The alpha and beta chains form an alternating ring which encloses part of the gamma chain. CF(1) is attached to CF(0) by a central stalk formed by the gamma and epsilon chains, while a peripheral stalk is formed by the delta and b chains.

The protein localises to the cell membrane. It catalyses the reaction ATP + H2O + 4 H(+)(in) = ADP + phosphate + 5 H(+)(out). Its function is as follows. Produces ATP from ADP in the presence of a proton gradient across the membrane. The catalytic sites are hosted primarily by the beta subunits. The chain is ATP synthase subunit beta from Streptomyces griseus subsp. griseus (strain JCM 4626 / CBS 651.72 / NBRC 13350 / KCC S-0626 / ISP 5235).